The chain runs to 572 residues: Proline--tRNA ligase (572 aa).

It belongs to the class-II aminoacyl-tRNA synthetase family. ProS type 1 subfamily. As to quaternary structure, homodimer.

It localises to the cytoplasm. It carries out the reaction tRNA(Pro) + L-proline + ATP = L-prolyl-tRNA(Pro) + AMP + diphosphate. Catalyzes the attachment of proline to tRNA(Pro) in a two-step reaction: proline is first activated by ATP to form Pro-AMP and then transferred to the acceptor end of tRNA(Pro). As ProRS can inadvertently accommodate and process non-cognate amino acids such as alanine and cysteine, to avoid such errors it has two additional distinct editing activities against alanine. One activity is designated as 'pretransfer' editing and involves the tRNA(Pro)-independent hydrolysis of activated Ala-AMP. The other activity is designated 'posttransfer' editing and involves deacylation of mischarged Ala-tRNA(Pro). The misacylated Cys-tRNA(Pro) is not edited by ProRS. This chain is Proline--tRNA ligase, found in Caldicellulosiruptor bescii (strain ATCC BAA-1888 / DSM 6725 / KCTC 15123 / Z-1320) (Anaerocellum thermophilum).